A 271-amino-acid chain; its full sequence is Putative phosphoenolpyruvate synthase regulatory protein (271 aa).

An ADP-binding site is contributed by 151 to 158 (GVSRSGKT).

It belongs to the pyruvate, phosphate/water dikinase regulatory protein family. PSRP subfamily.

It carries out the reaction [pyruvate, water dikinase] + ADP = [pyruvate, water dikinase]-phosphate + AMP + H(+). The catalysed reaction is [pyruvate, water dikinase]-phosphate + phosphate + H(+) = [pyruvate, water dikinase] + diphosphate. In terms of biological role, bifunctional serine/threonine kinase and phosphorylase involved in the regulation of the phosphoenolpyruvate synthase (PEPS) by catalyzing its phosphorylation/dephosphorylation. The polypeptide is Putative phosphoenolpyruvate synthase regulatory protein (Burkholderia thailandensis (strain ATCC 700388 / DSM 13276 / CCUG 48851 / CIP 106301 / E264)).